A 70-amino-acid polypeptide reads, in one-letter code: Protein SlyX homolog (70 aa).

The protein belongs to the SlyX family.

The protein is Protein SlyX homolog of Shewanella piezotolerans (strain WP3 / JCM 13877).